Reading from the N-terminus, the 285-residue chain is Probable xyloglucan endotransglucosylase/hydrolase protein 12 (285 aa).

The N-terminal stretch at 1–25 (MAAFATKQSPLLLASLLILIGVATG) is a signal peptide. Residues 26–215 (SFYDSFDITW…WTNAPFSASY (190 aa)) form the GH16 domain. The Nucleophile role is filled by Glu-101. Glu-105 (proton donor) is an active-site residue. Glu-105 serves as a coordination point for xyloglucan. Residue Asn-109 is glycosylated (N-linked (GlcNAc...) asparagine). Xyloglucan contacts are provided by residues 118-120 (HTN), 128-130 (NRE), 194-195 (DW), and Gly-199. 2 disulfide bridges follow: Cys-224/Cys-235 and Cys-268/Cys-282. Arg-273 is a binding site for xyloglucan.

It belongs to the glycosyl hydrolase 16 family. XTH group 2 subfamily. Post-translationally, contains at least one intrachain disulfide bond essential for its enzymatic activity. Root specific.

It localises to the secreted. Its subcellular location is the cell wall. The protein localises to the extracellular space. It is found in the apoplast. The catalysed reaction is breaks a beta-(1-&gt;4) bond in the backbone of a xyloglucan and transfers the xyloglucanyl segment on to O-4 of the non-reducing terminal glucose residue of an acceptor, which can be a xyloglucan or an oligosaccharide of xyloglucan.. Catalyzes xyloglucan endohydrolysis (XEH) and/or endotransglycosylation (XET). Cleaves and religates xyloglucan polymers, an essential constituent of the primary cell wall, and thereby participates in cell wall construction of growing tissues. This Arabidopsis thaliana (Mouse-ear cress) protein is Probable xyloglucan endotransglucosylase/hydrolase protein 12 (XTH12).